We begin with the raw amino-acid sequence, 110 residues long: Small ribosomal subunit protein bS16 (110 aa).

The tract at residues 84-110 is disordered; it reads KRAPRNNPEKAVPRKERKAAAEAAAKA. Residues 90–103 show a composition bias toward basic and acidic residues; that stretch reads NPEKAVPRKERKAA.

This sequence belongs to the bacterial ribosomal protein bS16 family.

This is Small ribosomal subunit protein bS16 from Afipia carboxidovorans (strain ATCC 49405 / DSM 1227 / KCTC 32145 / OM5) (Oligotropha carboxidovorans).